We begin with the raw amino-acid sequence, 149 residues long: Transcription factor Atoh7 (149 aa).

A bHLH domain is found at 41-93; that stretch reads RRRLAANARERRRMQGLNTAFDRLRRVVPQWGQDKKLSKYETLQMALSYIIAL.

As to quaternary structure, forms a heterodimer with TCF3 isoform E47; interaction may be required for DNA-binding in certain situations. As to expression, expressed in retinal ganglion cells. Expressed in the cerebellum, trapezoid body, ventral nucleus of the lateral lamniscus and in areas of the auditory hindbrain such as the cochlear nucleus, lateral superior olive and medial nucleus of the trapezoid body. Expressed in the modiolar nerve root and in the cochlear in a small group of bushy neurons within the acoustic nerve. Expressed weakly in the sensory epithelia of the saccule and utricle.

Its subcellular location is the nucleus. It localises to the perikaryon. The protein localises to the cell projection. It is found in the axon. Transcription factor that binds to DNA at the consensus sequence 5'-CAG[GC]TG-3'. Dimerization with TCF3 isoform E47 may be required in certain situations. Binds to gene promoters and enhancer elements, and thereby regulates a transcriptional program of retinal ganglion cell (RGC) determinant genes. Although the exact mechanism is not certain, retinal transcription regulation by ATOH7 has a role in RGC determination and survival, photoreceptor population development, targeting of RGC axons to the optic nerve and development of the retino-hypothalamic tract. Binds to its own promoter and enhancer sequences, suggesting autoregulation of ATOH7 transcription. Required for retinal circadian rhythm photoentrainment. Plays a role in brainstem auditory signaling and binaural processing. The polypeptide is Transcription factor Atoh7 (Mus musculus (Mouse)).